A 282-amino-acid chain; its full sequence is Bifunctional protein FolD (282 aa).

Residues 165-167 and Ile231 each bind NADP(+); that span reads GAS.

It belongs to the tetrahydrofolate dehydrogenase/cyclohydrolase family. Homodimer.

The enzyme catalyses (6R)-5,10-methylene-5,6,7,8-tetrahydrofolate + NADP(+) = (6R)-5,10-methenyltetrahydrofolate + NADPH. The catalysed reaction is (6R)-5,10-methenyltetrahydrofolate + H2O = (6R)-10-formyltetrahydrofolate + H(+). The protein operates within one-carbon metabolism; tetrahydrofolate interconversion. Its function is as follows. Catalyzes the oxidation of 5,10-methylenetetrahydrofolate to 5,10-methenyltetrahydrofolate and then the hydrolysis of 5,10-methenyltetrahydrofolate to 10-formyltetrahydrofolate. The sequence is that of Bifunctional protein FolD from Francisella tularensis subsp. tularensis (strain FSC 198).